The following is a 2148-amino-acid chain: Polyketide synthase 1 (2148 aa).

Residues 19-261 (FIFGDQSSCN…TPLAVHAPYH (243 aa)) form an N-terminal acylcarrier protein transacylase domain (SAT) region. Residues 394 to 829 (DSKIAIIGMS…GGNTALLVED (436 aa)) form the Ketosynthase family 3 (KS3) domain. Active-site for beta-ketoacyl synthase activity residues include cysteine 566, histidine 701, and histidine 745. The tract at residues 929–1233 (AFVFSGQGSQ…PSLMRNKDGW (305 aa)) is malonyl-CoA:ACP transacylase (MAT) domain. The active-site For acyl/malonyl transferase activity is serine 1018. A product template (PT) domain region spans residues 1310–1624 (TASVHRIVHE…RKVLNTAMPP (315 aa)). Residues 1314–1447 (HRIVHESVDK…SSLHFEQPKV (134 aa)) form an N-terminal hotdog fold region. A PKS/mFAS DH domain is found at 1314–1619 (HRIVHESVDK…FQGIPRKVLN (306 aa)). The Proton acceptor; for dehydratase activity role is filled by histidine 1346. The C-terminal hotdog fold stretch occupies residues 1474 to 1619 (LNSRMSSGVI…FQGIPRKVLN (146 aa)). Aspartate 1533 serves as the catalytic Proton donor; for dehydratase activity. Residues 1619-1655 (NTAMPPPKSQNEAQVHSSPAKSRPKPPGSASSVHSGR) are disordered. A compositionally biased stretch (polar residues) spans 1627–1638 (SQNEAQVHSSPA). A Carrier 1 domain is found at 1678–1752 (RDPMQALFKI…DLATHLGFDT (75 aa)). Serine 1712 carries the O-(pantetheine 4'-phosphoryl)serine modification. Positions 1756 to 1769 (DQSSGQSSSCGGLS) are enriched in low complexity. The tract at residues 1756-1796 (DQSSGQSSSCGGLSPRSDSTGEITSNATTPPSLSPRGSVSG) is disordered. Positions 1771-1796 (RSDSTGEITSNATTPPSLSPRGSVSG) are enriched in polar residues. The 78-residue stretch at 1793-1870 (SVSGSQCKDV…SFKHMFQQGH (78 aa)) folds into the Carrier 2 domain. Residue serine 1830 is modified to O-(pantetheine 4'-phosphoryl)serine. Positions 1882–2146 (LKQYRATSTL…ERVAAFIRST (265 aa)) are thioesterase (TE) domain. Serine 1973 serves as the catalytic For thioesterase activity.

In terms of biological role, polyketide synthase; part of the Pks1 gene cluster that mediates the biosynthesis of an anthraquinone derivative pigment that contributes to conidial pigmentation that provides protection from UV radiation, heat and cold stress. The polyketide synthase Pks1 produces 1-acetyl-2,4,6,8-tetrahydroxy-9,10-anthraquinone though condensation of acetyl-CoA with malonyl-CoA. The dehydratase EthD and the laccase Mlac1 further convert the anthraquinone derivative into the final conidial pigment. This chain is Polyketide synthase 1, found in Metarhizium acridum (strain CQMa 102).